The sequence spans 436 residues: MTVYHFVGIKGTGMSSLAQILHDMKHTVQGSDYEKRFFTQTALEKRSISILPFDKNNVEEGQVIIAGNAFPDTHEEIVAAKELNIPVHRYHHFLGDLMSQYTSVAVTGAHGKTSTTGLLAHVMQGAHPTSYLIGDGTGHGVENSKYFVFEACEYRRHFLSYNPDYAIMTNIDFDHPDYFADINDVFSAFQEMALQVKKGIIACGDDEELQKIQAKVPVIFYGFGEDNDFQARNIQKRTDGTIFDVFVRNTYYDTFKITGYGNHSVLNALAVIALCHYENVDVEAVKHQLTTFEGVKRRFNEKPMGEQVIIDDYAHHPTEINATIEAARQKHPEREVVAVFQPHTFSRTEKFLDEFAESLSKADQVYLCDIFGSARENKGELTIEDLQKRIDGAELITDTTTDVLKKHKNGVLIFMGAGDIQKFEAAYVKEVQVAEK.

Residue 108-114 (GAHGKTS) coordinates ATP.

Belongs to the MurCDEF family.

Its subcellular location is the cytoplasm. The catalysed reaction is UDP-N-acetyl-alpha-D-muramate + L-alanine + ATP = UDP-N-acetyl-alpha-D-muramoyl-L-alanine + ADP + phosphate + H(+). The protein operates within cell wall biogenesis; peptidoglycan biosynthesis. Functionally, cell wall formation. The protein is UDP-N-acetylmuramate--L-alanine ligase of Bacillus cereus (strain G9842).